Reading from the N-terminus, the 126-residue chain is Phosphoribosyl-AMP cyclohydrolase (126 aa).

Asp-73 serves as a coordination point for Mg(2+). Cys-74 lines the Zn(2+) pocket. 2 residues coordinate Mg(2+): Asp-75 and Asp-77. Zn(2+) is bound by residues Cys-91 and Cys-98.

It belongs to the PRA-CH family. Homodimer. Mg(2+) serves as cofactor. The cofactor is Zn(2+).

The protein localises to the cytoplasm. It catalyses the reaction 1-(5-phospho-beta-D-ribosyl)-5'-AMP + H2O = 1-(5-phospho-beta-D-ribosyl)-5-[(5-phospho-beta-D-ribosylamino)methylideneamino]imidazole-4-carboxamide. Its pathway is amino-acid biosynthesis; L-histidine biosynthesis; L-histidine from 5-phospho-alpha-D-ribose 1-diphosphate: step 3/9. In terms of biological role, catalyzes the hydrolysis of the adenine ring of phosphoribosyl-AMP. This is Phosphoribosyl-AMP cyclohydrolase from Solibacter usitatus (strain Ellin6076).